The following is a 581-amino-acid chain: Phosphoinositide phospholipase C 2 (581 aa).

An EF-hand-like domain is found at 26 to 102 (EIKTIFEKYS…NPPLALHKVH (77 aa)). The PI-PLC X-box domain occupies 103–248 (HDMDAPISHY…LKRRIIISTK (146 aa)). Catalysis depends on residues His-118 and His-164. The segment at 279-314 (PSFIQRNKSEAKDDLDGNDDDDDDDDEDKSKINAPP) is disordered. Residues 294–305 (DGNDDDDDDDDE) are compositionally biased toward acidic residues. The 117-residue stretch at 317 to 433 (KHLIAIHAGK…GYIKKPDLLL (117 aa)) folds into the PI-PLC Y-box domain. The C2 domain occupies 434 to 563 (KSGSDSDIFD…EGIRAFPLHS (130 aa)).

Ca(2+) is required as a cofactor. Phosphorylation level varies significantly during early response to bacterial elicitor. As to expression, expressed in roots, shoots, leaves and flowers.

The protein localises to the cell membrane. The catalysed reaction is a 1,2-diacyl-sn-glycero-3-phospho-(1D-myo-inositol-4,5-bisphosphate) + H2O = 1D-myo-inositol 1,4,5-trisphosphate + a 1,2-diacyl-sn-glycerol + H(+). In terms of biological role, the production of the second messenger molecules diacylglycerol (DAG) and inositol 1,4,5-trisphosphate (IP3) is mediated by activated phosphatidylinositol-specific phospholipase C enzymes. At physiological calcium concentration, the preferred substrate is phosphatidylinositol 4,5-bisphosphate versus phosphatidylinositol. In Arabidopsis thaliana (Mouse-ear cress), this protein is Phosphoinositide phospholipase C 2 (PLC2).